Consider the following 351-residue polypeptide: Probable NADP-dependent isopropanol dehydrogenase (351 aa).

Zn(2+)-binding residues include Cys-37, His-59, Glu-60, and Asp-150. NADP(+) contacts are provided by residues 175–178 (AGPV), 198–200 (DSR), 265–267 (VNY), and Lys-340.

It belongs to the zinc-containing alcohol dehydrogenase family. Requires Zn(2+) as cofactor.

It carries out the reaction propan-2-ol + NADP(+) = acetone + NADPH + H(+). Functionally, alcohol dehydrogenase with a preference for medium chain secondary alcohols, such as 2-butanol and isopropanol. Has very low activity with primary alcohols, such as ethanol. Under physiological conditions, the enzyme reduces aldehydes and 2-ketones to produce secondary alcohols. Is also active with acetaldehyde and propionaldehyde. This Mycoplasma pneumoniae (strain ATCC 29342 / M129 / Subtype 1) (Mycoplasmoides pneumoniae) protein is Probable NADP-dependent isopropanol dehydrogenase (adh).